Consider the following 405-residue polypeptide: MADVKKVVLAYSGGLDTSVILKWLQDTYNCEVVTFTADLGQGEEVEPARAKAQAMGVKEIYIDDLREEFVRDFVFPMFRANTVYEGEYLLGTSIARPLIAKRLIEIANATGADAISHGATGKGNDQVRFELGAYALKPGVKVIAPWREWDLLSREKLMDYAEKHGIPIERHGKKKSPYSMDANLLHISYEGGVLEDTWTEHEEEMWRWSVSPENAPDQATYIELTYRNGDIVAINGVEKSPATVLADLNRIGGANGIGRLDIVENRYVGMKSRGCYETPGGTIMLKAHRAIESITLDREVAHLKDELMPKYASLIYTGYWWSPERLMLQQMIDASQVNVNGVVRLKLYKGNVTVVGRKSDDSLFDANIATFEEDGGAYNQADAAGFIKLNALRMRIAANKGRSLL.

ATP is bound by residues Ala-10 to Ser-18 and Ala-37. The L-citrulline site is built by Tyr-88 and Ser-93. Gly-118 contributes to the ATP binding site. 3 residues coordinate L-aspartate: Thr-120, Asn-124, and Asp-125. Residue Asn-124 participates in L-citrulline binding. 5 residues coordinate L-citrulline: Arg-128, Ser-179, Ser-188, Glu-264, and Tyr-276.

The protein belongs to the argininosuccinate synthase family. Type 1 subfamily. In terms of assembly, homotetramer.

The protein localises to the cytoplasm. The enzyme catalyses L-citrulline + L-aspartate + ATP = 2-(N(omega)-L-arginino)succinate + AMP + diphosphate + H(+). It functions in the pathway amino-acid biosynthesis; L-arginine biosynthesis; L-arginine from L-ornithine and carbamoyl phosphate: step 2/3. The polypeptide is Argininosuccinate synthase (Pseudomonas putida (strain GB-1)).